The sequence spans 237 residues: Putative HTH-type transcriptional regulator ycf28 (237 aa).

One can recognise an HTH crp-type domain in the interval 155–228; the sequence is KSITNRLISL…KKKVIIHDPI (74 aa). A DNA-binding region (H-T-H motif) is located at residues 188–207; sequence HKVLAQIIGSNRVSITRIIS.

The protein localises to the plastid. It is found in the chloroplast. The protein is Putative HTH-type transcriptional regulator ycf28 (ycf28) of Porphyra purpurea (Red seaweed).